We begin with the raw amino-acid sequence, 261 residues long: uncharacterized protein (261 aa).

4 residues coordinate NADP(+): Ile-33, Lys-60, Asp-78, and Asn-105. Ser-157 serves as the catalytic Proton donor. Residues Tyr-172, Lys-176, and Thr-206 each coordinate NADP(+). Catalysis depends on Tyr-172, which acts as the Proton acceptor. The Lowers pKa of active site Tyr role is filled by Lys-176.

This sequence belongs to the short-chain dehydrogenases/reductases (SDR) family.

The protein localises to the cytoplasm. Its subcellular location is the nucleus. This is an uncharacterized protein from Schizosaccharomyces pombe (strain 972 / ATCC 24843) (Fission yeast).